Here is a 530-residue protein sequence, read N- to C-terminus: Light-independent protochlorophyllide reductase subunit B (530 aa).

Asp36 contributes to the [4Fe-4S] cluster binding site. The Proton donor role is filled by Asp287. 422–423 serves as a coordination point for substrate; that stretch reads GL. The segment at 453-472 is disordered; the sequence is PAVQTASSEPQPSAIETPSA. The segment covering 454–463 has biased composition (polar residues); that stretch reads AVQTASSEPQ.

It belongs to the ChlB/BchB/BchZ family. In terms of assembly, protochlorophyllide reductase is composed of three subunits; BchL, BchN and BchB. Forms a heterotetramer of two BchB and two BchN subunits. [4Fe-4S] cluster serves as cofactor.

The catalysed reaction is chlorophyllide a + oxidized 2[4Fe-4S]-[ferredoxin] + 2 ADP + 2 phosphate = protochlorophyllide a + reduced 2[4Fe-4S]-[ferredoxin] + 2 ATP + 2 H2O. Its pathway is porphyrin-containing compound metabolism; bacteriochlorophyll biosynthesis (light-independent). In terms of biological role, component of the dark-operative protochlorophyllide reductase (DPOR) that uses Mg-ATP and reduced ferredoxin to reduce ring D of protochlorophyllide (Pchlide) to form chlorophyllide a (Chlide). This reaction is light-independent. The NB-protein (BchN-BchB) is the catalytic component of the complex. The protein is Light-independent protochlorophyllide reductase subunit B of Rhodopseudomonas palustris (strain BisB18).